We begin with the raw amino-acid sequence, 727 residues long: Glycerol-3-phosphate dehydrogenase, mitochondrial (727 aa).

The N-terminal 42 residues, 1 to 42 (MAFQKVVKGTILMGGGALATVLGLSQFAHYRRKQVSLAYVEA), are a transit peptide targeting the mitochondrion. 71-99 (DILVIGGGATGCGCALDAVTRGLKTALVE) lines the FAD pocket. Position 601 is a phosphotyrosine (Tyr-601). EF-hand domains lie at 623–658 (PDID…INVQ) and 659–694 (MDED…VHTG). Positions 672, 674, 676, 678, and 683 each coordinate Ca(2+).

Belongs to the FAD-dependent glycerol-3-phosphate dehydrogenase family. Requires FAD as cofactor.

It is found in the mitochondrion. It carries out the reaction a quinone + sn-glycerol 3-phosphate = dihydroxyacetone phosphate + a quinol. Its pathway is polyol metabolism; glycerol degradation via glycerol kinase pathway; glycerone phosphate from sn-glycerol 3-phosphate (anaerobic route): step 1/1. Calcium-binding enhance the activity of the enzyme. Its function is as follows. Calcium-responsive mitochondrial glycerol-3-phosphate dehydrogenase which seems to be a key component of the pancreatic beta-cell glucose-sensing device. This Rattus norvegicus (Rat) protein is Glycerol-3-phosphate dehydrogenase, mitochondrial.